Here is a 484-residue protein sequence, read N- to C-terminus: Probable glycine dehydrogenase (decarboxylating) subunit 2 (484 aa).

Lys264 carries the N6-(pyridoxal phosphate)lysine modification.

This sequence belongs to the GcvP family. C-terminal subunit subfamily. The glycine cleavage system is composed of four proteins: P, T, L and H. In this organism, the P 'protein' is a heterodimer of two subunits. Pyridoxal 5'-phosphate is required as a cofactor.

The catalysed reaction is N(6)-[(R)-lipoyl]-L-lysyl-[glycine-cleavage complex H protein] + glycine + H(+) = N(6)-[(R)-S(8)-aminomethyldihydrolipoyl]-L-lysyl-[glycine-cleavage complex H protein] + CO2. Functionally, the glycine cleavage system catalyzes the degradation of glycine. The P protein binds the alpha-amino group of glycine through its pyridoxal phosphate cofactor; CO(2) is released and the remaining methylamine moiety is then transferred to the lipoamide cofactor of the H protein. The sequence is that of Probable glycine dehydrogenase (decarboxylating) subunit 2 from Legionella pneumophila (strain Lens).